The chain runs to 283 residues: Putative Ig-like domain-containing protein ORF10 (283 aa).

An N-terminal signal peptide occupies residues 1-55 (MIDKRNKKAVTHISTCLCHSSIPIYGDSPFLNTHRAAMDPRPLVLLLLLASHIST). N-linked (GlcNAc...) asparagine; by host glycosylation is found at Asn75, Asn92, Asn121, Asn157, Asn179, Asn198, Asn223, and Asn229. One can recognise an Ig-like domain in the interval 129–227 (QPLGQSIHHA…IDQQTNLTLT (99 aa)).

The chain is Putative Ig-like domain-containing protein ORF10 from Galliformes (FAdV-1).